Reading from the N-terminus, the 118-residue chain is Large ribosomal subunit protein bL19 (118 aa).

Belongs to the bacterial ribosomal protein bL19 family.

In terms of biological role, this protein is located at the 30S-50S ribosomal subunit interface and may play a role in the structure and function of the aminoacyl-tRNA binding site. This chain is Large ribosomal subunit protein bL19, found in Campylobacter jejuni subsp. jejuni serotype O:6 (strain 81116 / NCTC 11828).